The sequence spans 477 residues: Probable glycine dehydrogenase (decarboxylating) subunit 2 (477 aa).

Lys264 carries the N6-(pyridoxal phosphate)lysine modification.

This sequence belongs to the GcvP family. C-terminal subunit subfamily. The glycine cleavage system is composed of four proteins: P, T, L and H. In this organism, the P 'protein' is a heterodimer of two subunits. Pyridoxal 5'-phosphate serves as cofactor.

It carries out the reaction N(6)-[(R)-lipoyl]-L-lysyl-[glycine-cleavage complex H protein] + glycine + H(+) = N(6)-[(R)-S(8)-aminomethyldihydrolipoyl]-L-lysyl-[glycine-cleavage complex H protein] + CO2. Functionally, the glycine cleavage system catalyzes the degradation of glycine. The P protein binds the alpha-amino group of glycine through its pyridoxal phosphate cofactor; CO(2) is released and the remaining methylamine moiety is then transferred to the lipoamide cofactor of the H protein. In Fervidobacterium nodosum (strain ATCC 35602 / DSM 5306 / Rt17-B1), this protein is Probable glycine dehydrogenase (decarboxylating) subunit 2.